Reading from the N-terminus, the 257-residue chain is Pyridoxine 5'-phosphate synthase (257 aa).

Asparagine 16 serves as a coordination point for 3-amino-2-oxopropyl phosphate. 18–19 (DH) is a binding site for 1-deoxy-D-xylulose 5-phosphate. Arginine 27 contributes to the 3-amino-2-oxopropyl phosphate binding site. Histidine 52 functions as the Proton acceptor in the catalytic mechanism. 1-deoxy-D-xylulose 5-phosphate contacts are provided by arginine 54 and histidine 59. Glutamate 79 serves as the catalytic Proton acceptor. Threonine 109 provides a ligand contact to 1-deoxy-D-xylulose 5-phosphate. Residue histidine 200 is the Proton donor of the active site. 3-amino-2-oxopropyl phosphate is bound by residues glycine 201 and 222–223 (GH).

This sequence belongs to the PNP synthase family. In terms of assembly, homooctamer; tetramer of dimers.

The protein resides in the cytoplasm. It catalyses the reaction 3-amino-2-oxopropyl phosphate + 1-deoxy-D-xylulose 5-phosphate = pyridoxine 5'-phosphate + phosphate + 2 H2O + H(+). It participates in cofactor biosynthesis; pyridoxine 5'-phosphate biosynthesis; pyridoxine 5'-phosphate from D-erythrose 4-phosphate: step 5/5. In terms of biological role, catalyzes the complicated ring closure reaction between the two acyclic compounds 1-deoxy-D-xylulose-5-phosphate (DXP) and 3-amino-2-oxopropyl phosphate (1-amino-acetone-3-phosphate or AAP) to form pyridoxine 5'-phosphate (PNP) and inorganic phosphate. This chain is Pyridoxine 5'-phosphate synthase, found in Burkholderia pseudomallei (strain K96243).